A 962-amino-acid chain; its full sequence is Spliceosome associated factor 3, U4/U6 recycling protein (962 aa).

A compositionally biased stretch (low complexity) spans 1 to 21 (MATTAASSASEPEVEPQAGPE). Residues 1–92 (MATTAASSAS…EDEWEYDEEE (92 aa)) are disordered. Residue Ala2 is modified to N-acetylalanine. A mediates interaction with PRPF3 region spans residues 2 to 352 (ATTAASSASE…LVPDLWIRYS (351 aa)). Phosphoserine is present on Ser10. The segment covering 81–92 (AGEDEWEYDEEE) has biased composition (acidic residues). HAT repeat units follow at residues 127–159 (GELS…DEIS), 165–196 (LDRE…YSVG), 202–238 (GGLE…FESA), 243–276 (ARLE…WSEE), 325–357 (GDPA…YLDR), 360–392 (KVKD…AMER), 395–431 (LDHQ…YLRR), 441–474 (KELE…PSCL), and 488–521 (NNMQ…LERA). At Ser216 the chain carries Phosphoserine. Residues 488–521 (NNMQKARELWDSIMTRGNAKYANMWLEYYNLERA) form a required for interaction with USP4 region. Residues 538-952 (CTSDYPEHVC…VATEAPKMSN (415 aa)) form a necessary and sufficient for U6 snRNA binding region. The stretch at 559 to 618 (TLEDWDLAIQKTETRLARVNEQRMKAAEKEAALVQQEEEKAEQRKKVRAEKKALKKKKKT) forms a coiled coil. Positions 591–602 (LVQQEEEKAEQR) are enriched in basic and acidic residues. Residues 591–696 (LVQQEEEKAE…SLKRDMPKVA (106 aa)) form a disordered region. Residues 601 to 670 (QRKKVRAEKK…KEETELSGKC (70 aa)) form a required for nuclear localization region. The Nuclear localization signal signature appears at 602-609 (RKKVRAEK). Residues 603 to 618 (KKVRAEKKALKKKKKT) are compositionally biased toward basic residues. Positions 627–640 (DEDEENEWGEEEEE) are enriched in acidic residues. Ser651 carries the post-translational modification Phosphoserine. Basic and acidic residues predominate over residues 680-696 (KQKEKAASLKRDMPKVA). Positions 704-782 (VTVFVSNLPY…RPMFVSPCVD (79 aa)) constitute an RRM 1 domain. Residues Ser795 and Ser852 each carry the phosphoserine modification. The RRM 2 domain occupies 801–878 (HKLFISGLPF…NVIKVAISNP (78 aa)). The tract at residues 880-962 (QRKVPEKPEV…ADFAKLLLRK (83 aa)) is disordered. Position 906 is an omega-N-methylarginine (Arg906).

As to quaternary structure, component of the 7SK snRNP complex at least composed of P-TEFb (composed of CDK9 and CCNT1/cyclin-T1), HEXIM1, HEXIM2, BCDIN3, SART3 proteins and 7SK and U6 snRNAs. Interacts with AGO1 and AGO2. Interacts with PRPF3 and USP4; the interaction with PRPF3 is direct and recruits USP4 to its substrate PRPF3. Interacts with USP15; the interaction is direct. In terms of tissue distribution, ubiquitously expressed, with low level of expression in liver, heart and skeletal. Also detected in hematopoietic cells (at protein level).

The protein resides in the nucleus. Its subcellular location is the nucleoplasm. It is found in the cajal body. The protein localises to the nucleus speckle. It localises to the cytoplasm. In terms of biological role, U6 snRNP-binding protein that functions as a recycling factor of the splicing machinery. Promotes the initial reassembly of U4 and U6 snRNPs following their ejection from the spliceosome during its maturation. Also binds U6atac snRNPs and may function as a recycling factor for U4atac/U6atac spliceosomal snRNP, an initial step in the assembly of U12-type spliceosomal complex. The U12-type spliceosomal complex plays a role in the splicing of introns with non-canonical splice sites. May also function as a substrate-targeting factor for deubiquitinases like USP4 and USP15. Recruits USP4 to ubiquitinated PRPF3 within the U4/U5/U6 tri-snRNP complex, promoting PRPF3 deubiquitination and thereby regulating the spliceosome U4/U5/U6 tri-snRNP spliceosomal complex disassembly. May also recruit the deubiquitinase USP15 to histone H2B and mediate histone deubiquitination, thereby regulating gene expression and/or DNA repair. May play a role in hematopoiesis probably through transcription regulation of specific genes including MYC. The protein is Spliceosome associated factor 3, U4/U6 recycling protein of Mus musculus (Mouse).